The chain runs to 532 residues: GH3 domain-containing protein (532 aa).

The first 18 residues, M1 to A18, serve as a signal peptide directing secretion. Residues L100 to Y123 are disordered. 2 N-linked (GlcNAc...) asparagine glycosylation sites follow: N356 and N451.

This sequence belongs to the GH3 family. As to expression, highly expressed in mammary tissues from mature virgins and at day 13 of pregnancy, and at lower level during lactation. Expressed at intermediate level in liver. Expressed at lower level in kidney, heart and brain.

It is found in the endoplasmic reticulum. The protein resides in the nucleus envelope. The protein is GH3 domain-containing protein (Ghdc) of Mus musculus (Mouse).